Reading from the N-terminus, the 226-residue chain is PKHD-type hydroxylase LHK_00496 (226 aa).

Residues 78 to 178 form the Fe2OG dioxygenase domain; sequence RFFPPLFNRY…RVASFMWIQS (101 aa). 3 residues coordinate Fe cation: His96, Asp98, and His159. Arg169 lines the 2-oxoglutarate pocket.

Requires Fe(2+) as cofactor. L-ascorbate serves as cofactor.

The sequence is that of PKHD-type hydroxylase LHK_00496 from Laribacter hongkongensis (strain HLHK9).